A 79-amino-acid polypeptide reads, in one-letter code: MDVKAEVIEIIDELFMEDVSDMMDEDLFDAGVLDSMGTVELIVELESRFDIRVPVSEFGRDDWNTANKIVEGVTELRNA.

In terms of domain architecture, Carrier spans 1-77 (MDVKAEVIEI…KIVEGVTELR (77 aa)). Serine 35 is subject to O-(pantetheine 4'-phosphoryl)serine.

The protein belongs to the DltC family. In terms of processing, 4'-phosphopantetheine is transferred from CoA to a specific serine of apo-DCP.

It is found in the cytoplasm. The protein operates within cell wall biogenesis; lipoteichoic acid biosynthesis. In terms of biological role, carrier protein involved in the D-alanylation of lipoteichoic acid (LTA). The loading of thioester-linked D-alanine onto DltC is catalyzed by D-alanine--D-alanyl carrier protein ligase DltA. The DltC-carried D-alanyl group is further transferred to cell membrane phosphatidylglycerol (PG) by forming an ester bond, probably catalyzed by DltD. D-alanylation of LTA plays an important role in modulating the properties of the cell wall in Gram-positive bacteria, influencing the net charge of the cell wall. The protein is D-alanyl carrier protein of Streptococcus thermophilus (strain CNRZ 1066).